The sequence spans 478 residues: Leukotoxin secretion protein D (478 aa).

Topologically, residues 1-59 (MKIWLSGIYEFFLRYKNTWAEVWKIRKELDHPNRKKDESEFLPAHLDLIETPVSKKPRL) are cytoplasmic. The chain crosses the membrane as a helical span at residues 60 to 80 (IAYLIMLFLVVAIVLASVSKV). The Periplasmic portion of the chain corresponds to 81–478 (EIVATAPGKL…ESVTESLRER (398 aa)).

Belongs to the membrane fusion protein (MFP) (TC 8.A.1) family.

It is found in the cell inner membrane. In terms of biological role, involved in the transport of the Leukotoxin. The protein is Leukotoxin secretion protein D (lktD) of Mannheimia haemolytica (Pasteurella haemolytica).